A 670-amino-acid chain; its full sequence is Aurofusarin cluster transcription factor aurR2 (670 aa).

The zn(2)-C6 fungal-type DNA-binding region spans Cys-12 to Cys-38. Disordered regions lie at residues Arg-57–Gly-76 and Gly-92–Thr-115. The segment covering Gly-92–Thr-113 has biased composition (basic and acidic residues).

It is found in the nucleus. Functionally, transcription factor that may participate in the regulation of the expression of the gene cluster that mediates the biosynthesis of aurofusarin, a red mycelium pigment which is acting as a mycotoxin. The chain is Aurofusarin cluster transcription factor aurR2 from Gibberella zeae (strain ATCC MYA-4620 / CBS 123657 / FGSC 9075 / NRRL 31084 / PH-1) (Wheat head blight fungus).